The primary structure comprises 423 residues: MAPSIQSLSMIHDSQECIKPIPAFYCCYLLRSCVRHASLYIGSTPDPARRLAQHNGDRNGAAKRTLRENLRPWEMVAIVSGFTSRVAALQFEWAWQNTKVSRHADLDGNAIQELGVRICPRTGKGVKGTAKPRTSLTNILANLHLLLRSPYFSKWPVEVRFFSADVHRVWQVWLQRVDGLLNDGIRVVTDFALDGISEVERKELLAGAGRVGTLDVGYNSIKEYVEKSQFLLEDGERINCGVSHLSCLSSHFLKDKDSDSELIPREGTCPACYGKLEWLTMMKEISLRLRGQEEVNRLFRRRRQAGTPKGQGLKSVRGRGRGRGHSEDESDALQVSTGLDIVDLTPCSDDPWTIDCAIGELGGIAHRPGGESSGNDSDATITLEMETPPQRRRRNQNTRTQRLGLQKSATINLSDWDDAEVIE.

In terms of domain architecture, GIY-YIG spans 23-105 (AFYCCYLLRS…QNTKVSRHAD (83 aa)). Disordered regions lie at residues 300–334 (RRRRQAGTPKGQGLKSVRGRGRGRGHSEDESDALQ) and 365–406 (AHRP…LGLQ).

It belongs to the SLX1 family. Forms a heterodimer with SLX4. The cofactor is a divalent metal cation.

It localises to the nucleus. Catalytic subunit of the SLX1-SLX4 structure-specific endonuclease that resolves DNA secondary structures generated during DNA repair and recombination. Has endonuclease activity towards branched DNA substrates, introducing single-strand cuts in duplex DNA close to junctions with ss-DNA. The sequence is that of Structure-specific endonuclease subunit SLX1 from Paracoccidioides brasiliensis (strain Pb03).